The following is a 126-amino-acid chain: Gas vesicle protein J (126 aa).

It belongs to the gas vesicle GvpA family. Interacts with GvpA.

The protein localises to the gas vesicle. Functionally, a minor component of the gas vesicle, might be involved in nucleating gas vesicle formation. Gas vesicles (GV) are hollow, gas filled proteinaceous nanostructures. During planktonic growth they allow positioning of the organism at a favorable depth for light or nutrient acquisition. The sequence is that of Gas vesicle protein J from Pseudanabaena galeata (strain PCC 6901).